Consider the following 147-residue polypeptide: MEIKTKAMGLVEIQDEQIIELVDGFYGFEEFHKYALLDSGKEPFFWVQSLDDQNLAFIVIDPFLFRPDYELDIDDELLKPIEAESPKDLLVFALVTIPPAGSPITANLQGPLIINKKNKKAFQAVLNDGKWNTKHDILAELNAAGRN.

This sequence belongs to the FliW family. In terms of assembly, interacts with translational regulator CsrA and flagellin(s).

It is found in the cytoplasm. Its function is as follows. Acts as an anti-CsrA protein, binds CsrA and prevents it from repressing translation of its target genes, one of which is flagellin. Binds to flagellin and participates in the assembly of the flagellum. This chain is Flagellar assembly factor FliW, found in Treponema denticola (strain ATCC 35405 / DSM 14222 / CIP 103919 / JCM 8153 / KCTC 15104).